The chain runs to 562 residues: NAD-dependent malic enzyme (562 aa).

The active-site Proton donor is Tyr-101. Arg-154 contributes to the NAD(+) binding site. Lys-172 serves as the catalytic Proton acceptor. The a divalent metal cation site is built by Glu-243, Asp-244, and Asp-267. 2 residues coordinate NAD(+): Asp-267 and Asn-415.

Belongs to the malic enzymes family. Homotetramer. Mg(2+) is required as a cofactor. Mn(2+) serves as cofactor.

The enzyme catalyses (S)-malate + NAD(+) = pyruvate + CO2 + NADH. The catalysed reaction is oxaloacetate + H(+) = pyruvate + CO2. This chain is NAD-dependent malic enzyme, found in Aliivibrio salmonicida (strain LFI1238) (Vibrio salmonicida (strain LFI1238)).